The chain runs to 374 residues: S-adenosylmethionine:tRNA ribosyltransferase-isomerase (374 aa).

This sequence belongs to the QueA family. Monomer.

Its subcellular location is the cytoplasm. The enzyme catalyses 7-aminomethyl-7-carbaguanosine(34) in tRNA + S-adenosyl-L-methionine = epoxyqueuosine(34) in tRNA + adenine + L-methionine + 2 H(+). It participates in tRNA modification; tRNA-queuosine biosynthesis. In terms of biological role, transfers and isomerizes the ribose moiety from AdoMet to the 7-aminomethyl group of 7-deazaguanine (preQ1-tRNA) to give epoxyqueuosine (oQ-tRNA). In Prochlorococcus marinus (strain MIT 9215), this protein is S-adenosylmethionine:tRNA ribosyltransferase-isomerase.